The sequence spans 416 residues: MTGSNSPAAATDFFHDAPSLPAVPETPVRKFNINFGPQHPAAHGVLRLVLELDGEIVERVDPHIGLLHRGTEKLMEARTYLQNIPYFDRLDYVAPMNQEHAFCLAIEKLLGVDVPLRGSLIRVLFCEIGRVLNHLLNVTTQAMDVGALTPPLWGFEEREKLMVFYERACGARLHANYFRPGGVHQDLTPSLIDDIEKWAKAFPKICDDIEGLITDNRIFKQRNVDIGVVTKEDALAWGFSGVMVRGSGIAWDLRRNQPYECYNDFEFDIPLGKNGDCYDRYLCRMQEMRESTKIILQAIEKLRATPGPVMTQDNKVAPPRRAEMKRSMEALIHHFKLYTEGFRTPEGEVYACVEAPKGEFGVFLVSNGTNKPYRCKIKAPGFSHLAAMDWMNRGHQLADVSAILGSLDIVFGEVDR.

Belongs to the complex I 49 kDa subunit family. NDH-1 is composed of 14 different subunits. Subunits NuoB, C, D, E, F, and G constitute the peripheral sector of the complex.

The protein resides in the cell inner membrane. The enzyme catalyses a quinone + NADH + 5 H(+)(in) = a quinol + NAD(+) + 4 H(+)(out). Its function is as follows. NDH-1 shuttles electrons from NADH, via FMN and iron-sulfur (Fe-S) centers, to quinones in the respiratory chain. The immediate electron acceptor for the enzyme in this species is believed to be ubiquinone. Couples the redox reaction to proton translocation (for every two electrons transferred, four hydrogen ions are translocated across the cytoplasmic membrane), and thus conserves the redox energy in a proton gradient. The sequence is that of NADH-quinone oxidoreductase subunit D from Caulobacter sp. (strain K31).